The chain runs to 121 residues: Large ribosomal subunit protein bL20 (121 aa).

Belongs to the bacterial ribosomal protein bL20 family.

In terms of biological role, binds directly to 23S ribosomal RNA and is necessary for the in vitro assembly process of the 50S ribosomal subunit. It is not involved in the protein synthesizing functions of that subunit. The protein is Large ribosomal subunit protein bL20 of Francisella tularensis subsp. mediasiatica (strain FSC147).